The sequence spans 75 residues: Phytosulfokines (75 aa).

The N-terminal stretch at 1-22 (MSSKAITLLLIALLFSLSLAQA) is a signal peptide. The propeptide occupies 23 to 66 (ARPLQPADSTKSVHVIPEKVHDEACEGVGEEECLMRRTLTAHVD). Sulfotyrosine is present on residues Tyr-67 and Tyr-69. A propeptide spanning residues 72-75 (DHNP) is cleaved from the precursor.

It belongs to the phytosulfokine family. In terms of processing, sulfation is important for activity and for the binding to a putative membrane receptor. Deletion of the sulfate groups of Tyr-67 and Tyr-69 resulted in compounds with respectively 0.6% and 4% of the activity. Post-translationally, PSK-alpha is produced by endopeptidase digestion. PSK-beta is produced from PSK-alpha by exopeptidase digestion.

Its subcellular location is the secreted. Functionally, promotes plant cell differentiation, organogenesis and somatic embryogenesis as well as cell proliferation. This Asparagus officinalis (Garden asparagus) protein is Phytosulfokines (PSK).